A 550-amino-acid chain; its full sequence is Glucose-6-phosphate isomerase 1 (550 aa).

Residue Glu358 is the Proton donor of the active site. Residues His389 and Lys513 contribute to the active site.

This sequence belongs to the GPI family.

Its subcellular location is the cytoplasm. It catalyses the reaction alpha-D-glucose 6-phosphate = beta-D-fructose 6-phosphate. It functions in the pathway carbohydrate biosynthesis; gluconeogenesis. The protein operates within carbohydrate degradation; glycolysis; D-glyceraldehyde 3-phosphate and glycerone phosphate from D-glucose: step 2/4. Catalyzes the reversible isomerization of glucose-6-phosphate to fructose-6-phosphate. This chain is Glucose-6-phosphate isomerase 1, found in Streptomyces coelicolor (strain ATCC BAA-471 / A3(2) / M145).